We begin with the raw amino-acid sequence, 205 residues long: MTPTGTLYTVSAPSGAGKTSLVSALIDTTSNIMVSVSHTTRAKRPGEQEGVNYHFVSHEQFATMVENNAFLEHAQVFTNFYGTSKQWVEDTLAKGIDVILEIDWQGAQQVRKLIPAAKSVFILPPSRECLRERLTGRGQDDESVIDARMAEAKSEISHYVEAQYLIVNDDFDTALTEFRSIVVANRLALEKQQDKHQSLLESLLS.

Positions 5–183 (GTLYTVSAPS…ALTEFRSIVV (179 aa)) constitute a Guanylate kinase-like domain. An ATP-binding site is contributed by 12–19 (APSGAGKT).

It belongs to the guanylate kinase family.

Its subcellular location is the cytoplasm. The catalysed reaction is GMP + ATP = GDP + ADP. Essential for recycling GMP and indirectly, cGMP. This Saccharophagus degradans (strain 2-40 / ATCC 43961 / DSM 17024) protein is Guanylate kinase.